Consider the following 70-residue polypeptide: Sec-independent protein translocase protein TatA (70 aa).

The helical transmembrane segment at 1-21 (MAIGVNQLLIILVIIVLLFGA) threads the bilayer.

The protein belongs to the TatA/E family. In terms of assembly, the Tat system comprises two distinct complexes: a TatABC complex, containing multiple copies of TatA, TatB and TatC subunits, and a separate TatA complex, containing only TatA subunits. Substrates initially bind to the TatABC complex, which probably triggers association of the separate TatA complex to form the active translocon.

Its subcellular location is the cell inner membrane. Functionally, part of the twin-arginine translocation (Tat) system that transports large folded proteins containing a characteristic twin-arginine motif in their signal peptide across membranes. TatA could form the protein-conducting channel of the Tat system. The chain is Sec-independent protein translocase protein TatA from Campylobacter curvus (strain 525.92).